A 608-amino-acid chain; its full sequence is Probable adenylate kinase 5, chloroplastic (608 aa).

Positions M1 to P20 are enriched in low complexity. Positions M1–C44 are disordered. Residues M1 to R75 constitute a chloroplast transit peptide. A99–T104 contacts ATP. The tract at residues S119–V148 is NMP. Residues T120, R125, M146–V148, G175–R178, and Q182 contribute to the AMP site. ATP-binding positions include R209, R213, and I222–Y223. Residues G212 to D245 are LID. 2 residues coordinate AMP: R242 and R253.

Belongs to the adenylate kinase family.

The protein resides in the plastid. It is found in the chloroplast. The catalysed reaction is AMP + ATP = 2 ADP. Functionally, catalyzes the reversible transfer of the terminal phosphate group between ATP and AMP. Plays an important role in cellular energy homeostasis and in adenine nucleotide metabolism. The sequence is that of Probable adenylate kinase 5, chloroplastic from Oryza sativa subsp. japonica (Rice).